The following is a 114-amino-acid chain: Pole-localizer protein TmaR (114 aa).

A coiled-coil region spans residues 70 to 111; the sequence is RDDYESRVDDYTIRNAELSKQRREASTKMKEQKKAHAELLKN. The tract at residues 89 to 114 is disordered; it reads KQRREASTKMKEQKKAHAELLKNAEK.

It belongs to the pole-localizer TmaR family.

It localises to the cytoplasm. In terms of biological role, pole-localizer protein involved in the regulation of several cellular processes. The sequence is that of Pole-localizer protein TmaR from Haemophilus influenzae (strain PittEE).